Reading from the N-terminus, the 147-residue chain is SsrA-binding protein (147 aa).

Residues 119–147 (AKGKKQHDKRESEKQKEWERDKQRLMRPK) are disordered. Positions 126–147 (DKRESEKQKEWERDKQRLMRPK) are enriched in basic and acidic residues.

It belongs to the SmpB family.

It is found in the cytoplasm. In terms of biological role, required for rescue of stalled ribosomes mediated by trans-translation. Binds to transfer-messenger RNA (tmRNA), required for stable association of tmRNA with ribosomes. tmRNA and SmpB together mimic tRNA shape, replacing the anticodon stem-loop with SmpB. tmRNA is encoded by the ssrA gene; the 2 termini fold to resemble tRNA(Ala) and it encodes a 'tag peptide', a short internal open reading frame. During trans-translation Ala-aminoacylated tmRNA acts like a tRNA, entering the A-site of stalled ribosomes, displacing the stalled mRNA. The ribosome then switches to translate the ORF on the tmRNA; the nascent peptide is terminated with the 'tag peptide' encoded by the tmRNA and targeted for degradation. The ribosome is freed to recommence translation, which seems to be the essential function of trans-translation. This is SsrA-binding protein from Nitrosospira multiformis (strain ATCC 25196 / NCIMB 11849 / C 71).